Consider the following 530-residue polypeptide: Fusaric acid resistance protein FusA (530 aa).

Residues 1–23 form the signal peptide; the sequence is MQSPATKGTLALAVLAVSLIMAG. Cys24 is lipidated: N-palmitoyl cysteine. A lipid anchor (S-diacylglycerol cysteine) is attached at Cys24. Disordered regions lie at residues 375-442 and 476-530; these read NAGV…RQRA and GVET…PAAR. Low complexity-rich tracts occupy residues 421 to 430 and 494 to 530; these read RPQLPAVARR and AAGAAAPAAASGAKPVAAAARPAQVAAAGAAGVPAAR.

Belongs to the outer membrane factor (OMF) (TC 1.B.17) family.

The protein resides in the cell membrane. Functionally, involved in the resistance (detoxification) of the fungal toxin fusaric acid. The polypeptide is Fusaric acid resistance protein FusA (fusA) (Burkholderia cepacia (Pseudomonas cepacia)).